Here is a 270-residue protein sequence, read N- to C-terminus: Aliphatic sulfonates import ATP-binding protein SsuB 3 (270 aa).

Positions L17–L238 constitute an ABC transporter domain. G49–S56 is an ATP binding site.

This sequence belongs to the ABC transporter superfamily. Aliphatic sulfonates importer (TC 3.A.1.17.2) family. In terms of assembly, the complex is composed of two ATP-binding proteins (SsuB), two transmembrane proteins (SsuC) and a solute-binding protein (SsuA).

It localises to the cell inner membrane. The enzyme catalyses ATP + H2O + aliphatic sulfonate-[sulfonate-binding protein]Side 1 = ADP + phosphate + aliphatic sulfonateSide 2 + [sulfonate-binding protein]Side 1.. Its function is as follows. Part of the ABC transporter complex SsuABC involved in aliphatic sulfonates import. Responsible for energy coupling to the transport system. This is Aliphatic sulfonates import ATP-binding protein SsuB 3 from Pseudomonas savastanoi pv. phaseolicola (strain 1448A / Race 6) (Pseudomonas syringae pv. phaseolicola (strain 1448A / Race 6)).